A 195-amino-acid polypeptide reads, in one-letter code: Putative nucleotidase BH1399 (195 aa).

It belongs to the 5'(3')-deoxyribonucleotidase family.

In Halalkalibacterium halodurans (strain ATCC BAA-125 / DSM 18197 / FERM 7344 / JCM 9153 / C-125) (Bacillus halodurans), this protein is Putative nucleotidase BH1399.